Here is a 72-residue protein sequence, read N- to C-terminus: UPF0150 protein jhp_0960 (72 aa).

This sequence belongs to the UPF0150 family.

This Helicobacter pylori (strain J99 / ATCC 700824) (Campylobacter pylori J99) protein is UPF0150 protein jhp_0960.